The primary structure comprises 145 residues: Lysozyme-like protein 4 (145 aa).

The N-terminal stretch at Met1–Ala19 is a signal peptide. The C-type lysozyme domain maps to Ser20–Leu145. 4 cysteine pairs are disulfide-bonded: Cys25-Cys143, Cys49-Cys130, Cys84-Cys95, and Cys91-Cys109. Residue Glu54 is part of the active site.

It belongs to the glycosyl hydrolase 22 family. As to quaternary structure, monomer. In terms of tissue distribution, expressed in the brain, lung, ovary, uterus and testis. In testis expressed in the germinal epithelium and on the maturing spermatozoa (at protein level).

The protein resides in the secreted. Its subcellular location is the cytoplasmic vesicle. The protein localises to the secretory vesicle. It localises to the acrosome. It is found in the cell projection. The protein resides in the cilium. Its subcellular location is the flagellum. Its function is as follows. May be involved in fertilization. Has no detectable bacteriolytic and lysozyme activities in vitro. The protein is Lysozyme-like protein 4 (Lyzl4) of Rattus norvegicus (Rat).